A 278-amino-acid chain; its full sequence is Trehalose monomycolate transport factor A (278 aa).

M1 is a topological domain (periplasmic). The chain crosses the membrane as a helical span at residues 2-22 (VPLWFTLSALCFVGAAVLLYV). The Cytoplasmic segment spans residues 23–278 (DIDRRRGLGR…NGREASHFQR (256 aa)). A disordered region spans residues 200-278 (PPVPQNGSQA…NGREASHFQR (79 aa)). Basic and acidic residues predominate over residues 269–278 (NGREASHFQR).

In terms of assembly, monomer. Interacts (via N-terminus) with MmpL3; active trehalose monomycolate (TMM) biosynthesis is not required for the complex formation. Interacts with MSMEG_5308.

Its subcellular location is the cell inner membrane. The protein localises to the cell septum. It localises to the cell tip. Its function is as follows. Required for MmpL3-dependent trehalose monomycolate (TMM) transport to the cell wall. Required for growth and cell elongation. In Mycolicibacterium smegmatis (strain ATCC 700084 / mc(2)155) (Mycobacterium smegmatis), this protein is Trehalose monomycolate transport factor A.